Here is a 257-residue protein sequence, read N- to C-terminus: Beta-fibrinogenase (257 aa).

Positions 1–18 are cleaved as a signal peptide; that stretch reads MVLIRVLANLLLLQLSHA. The propeptide occupies 19–24; sequence QKSSEL. One can recognise a Peptidase S1 domain in the interval 25-248; it reads VVGGDECNIN…YTDWIQSIIA (224 aa). 6 cysteine pairs are disulfide-bonded: C31/C162, C49/C65, C97/C255, C141/C209, C173/C188, and C199/C224. An N-linked (GlcNAc...) asparagine glycan is attached at N44. H64 (charge relay system) is an active-site residue. Residues N78 and N102 are each glycosylated (N-linked (GlcNAc...) asparagine). Catalysis depends on D109, which acts as the Charge relay system. N-linked (GlcNAc...) asparagine glycans are attached at residues N153 and N169. The active-site Charge relay system is S203. N250 carries an N-linked (GlcNAc...) asparagine glycan.

As to quaternary structure, monomer. Post-translationally, glycosylated. Contains 23.0% of hexoses, 8.3% of hexosamines and 1.0% of sialic acids. As to expression, expressed by the venom gland.

The protein resides in the secreted. Its activity is regulated as follows. Inhibited by diisopropylfluorophosphate (DFP) and PMSF. In terms of biological role, snake venom serine protease that has fibrinogenolytic activities by hydrolyzing the beta chain of fibrinogen (FGB). Typical arginine esterase which hydrolyzes esters and amides of arginine. In Macrovipera lebetinus (Levantine viper), this protein is Beta-fibrinogenase.